The primary structure comprises 645 residues: L-aspartate oxidase, chloroplastic (645 aa).

The transit peptide at 1–70 (MAALMNGFGS…RMRHKVGSIR (70 aa)) directs the protein to the chloroplast. Residues 92-95 (SGVA), Lys114, 121-128 (NTNYAQGG), and Asp292 each bind FAD. Arg368 functions as the Proton donor/acceptor in the catalytic mechanism. FAD is bound by residues Glu453 and 469-470 (SL).

Belongs to the FAD-dependent oxidoreductase 2 family. NadB subfamily. It depends on FAD as a cofactor.

It is found in the plastid. The protein resides in the chloroplast. The enzyme catalyses L-aspartate + O2 = iminosuccinate + H2O2. It participates in cofactor biosynthesis; NAD(+) biosynthesis; iminoaspartate from L-aspartate (oxidase route): step 1/1. Functionally, catalyzes the oxidation of L-aspartate to iminoaspartate. This chain is L-aspartate oxidase, chloroplastic, found in Oryza sativa subsp. japonica (Rice).